We begin with the raw amino-acid sequence, 921 residues long: Guanylate kinase-associated protein mars (921 aa).

The residue at position 49 (Ser-49) is a Phosphoserine. Thr-51 carries the phosphothreonine modification. 2 positions are modified to phosphoserine: Ser-76 and Ser-170. Tyr-172 bears the Phosphotyrosine mark. 2 disordered regions span residues 179–208 (GKGK…TVAA) and 273–325 (RPTP…PLGN). 2 stretches are compositionally biased toward low complexity: residues 193 to 208 (KPTS…TVAA) and 273 to 285 (RPTP…AKTP). The residue at position 444 (Ser-444) is a Phosphoserine. The disordered stretch occupies residues 500–531 (QTTVKEDTGDSTLVPEGTKTPPRRESNGMPNY). A Phosphothreonine modification is found at Thr-519. Position 554 is a phosphoserine (Ser-554). 2 disordered regions span residues 641-660 (AGAT…SKPV) and 743-763 (TKVE…RHSS). A phosphoserine mark is found at Ser-785 and Ser-792. Disordered regions lie at residues 809–833 (QNAA…TKRQ) and 861–921 (ETVG…SEFM). Thr-826 carries the phosphothreonine modification. A compositionally biased stretch (polar residues) spans 878–907 (EASTESGSLEQNPGRDSNQENEATPRTYTL).

It belongs to the SAPAP family. Expressed in the central nervous system and at different stages of gametogenesis. In embryos, it is expressed in central nervous system and brain. In testis, it is strongly expressed in pre-meiotic germ cells, but is not found in somatic or post-meiotic cells.

The protein resides in the cell membrane. Its subcellular location is the nucleus. It localises to the nucleoplasm. It is found in the cytoplasm. The protein localises to the cytoskeleton. The protein resides in the spindle. In terms of biological role, cell cycle regulator. The chain is Guanylate kinase-associated protein mars (mars) from Drosophila melanogaster (Fruit fly).